We begin with the raw amino-acid sequence, 489 residues long: Lysine-specific permease LysP (489 aa).

The Cytoplasmic segment spans residues 2 to 22 (VSETKTTEAPGLRRELKARHL). Residues 23-43 (TMIAIGGSIGTGLFVASGATI) traverse the membrane as a helical segment. The Periplasmic segment spans residues 44–45 (SQ). The helical transmembrane segment at 46 to 66 (AGPGGALLSYMLIGLMVYFLM) threads the bilayer. Over 67–105 (TSLGELAAYMPVSGSFATYGQNYVEEGFGFALGWNYWYN) the chain is Cytoplasmic. Residues 106-126 (WAVTIAVDLVAAQLVMSWWFP) traverse the membrane as a helical segment. Over 127 to 128 (DT) the chain is Periplasmic. The helical transmembrane segment at 129-149 (PGWIWSALFLGVIFLLNYISV) threads the bilayer. Topologically, residues 150-161 (RGFGEAEYWFSL) are cytoplasmic. The helical transmembrane segment at 162–182 (IKVTTVIVFIIVGVLMIIGIF) threads the bilayer. Residues 183–197 (KGAQPAGWSNWTIGE) are Periplasmic-facing. Residues 198 to 218 (APFAGGFAAMIGVAMIVGFSF) form a helical membrane-spanning segment. Over 219-244 (QGTELIGIAAGESEDPAKNIPRAVRQ) the chain is Cytoplasmic. A helical membrane pass occupies residues 245–265 (VFWRILLFYVFAILIISLIIP). Residues 266–290 (YTDPSLLRNDVKDISVSPFTLVFQH) are Periplasmic-facing. The chain crosses the membrane as a helical span at residues 291-311 (AGLLSAAAVMNAVILTAVLSA). The Cytoplasmic portion of the chain corresponds to 312 to 346 (GNSGMYASTRMLYTLACDGKAPRIFAKLSRGGVPR). A helical transmembrane segment spans residues 347 to 367 (NALYATTVIAGLCFLTSMFGN). At 368–370 (QTV) the chain is on the periplasmic side. Residues 371–391 (YLWLLNTSGMTGFIAWLGIAI) traverse the membrane as a helical segment. The Cytoplasmic segment spans residues 392–413 (SHYRFRRGYVLQGHDINDLPYR). The helical transmembrane segment at 414-434 (SGFFPLGPIFAFILCLIITLG) threads the bilayer. At 435-446 (QNYEAFLKDTID) the chain is on the periplasmic side. The chain crosses the membrane as a helical span at residues 447–467 (WGGVAATYIGIPLFLIIWFGY). Residues 468 to 489 (KLIKGTHFVRYSEMKFPQNDKK) are Cytoplasmic-facing.

This sequence belongs to the amino acid-polyamine-organocation (APC) superfamily. Amino acid transporter (AAT) (TC 2.A.3.1) family. In terms of assembly, interacts strongly with the transcriptional activator CadC in the absence of lysine or at low lysine concentrations. Interaction is markedly attenuated under increasing lysine levels. Concomitant pH-dependent protonation of periplasmic amino acids in both proteins dissolves their electrostatic connections resulting in further destabilization of the CadC/LysP interaction. Low pH promotes oligomerization of LysP.

Its subcellular location is the cell inner membrane. It carries out the reaction L-lysine(out) + H(+)(out) = L-lysine(in) + H(+)(in). Functionally, permease involved in lysine uptake. In addition, functions as a lysine sensor that mediates the lysine-dependent regulation of the transcriptional activator CadC. In the absence of lysine, or at low lysine concentrations, LysP inhibits CadC by an interaction with the transmembrane domain of CadC. In the presence of lysine, LysP loses its ability to interact with and inhibit CadC, and acts as a lysine permease. The protein is Lysine-specific permease LysP of Escherichia coli (strain K12).